A 439-amino-acid chain; its full sequence is Rho GTPase-activating protein 1 (439 aa).

Met1 is modified (N-acetylmethionine). The span at 28-48 (IDEKNWPSDEMPDFPKSDDSK) shows a compositional bias: basic and acidic residues. The interval 28–52 (IDEKNWPSDEMPDFPKSDDSKSSSP) is disordered. A phosphoserine mark is found at Ser44, Ser47, Ser50, and Ser51. Positions 63 to 218 (PYYDIARHQI…QVLKYDDFLK (156 aa)) constitute a CRAL-TRIO domain. Tyr65 is subject to Phosphotyrosine. N6-acetyllysine is present on Lys80. An SH3-binding motif is present at residues 228-238 (PKPMPPRPPLP). Residues 244–431 (VSLQHLQEKN…FLLDHQGELF (188 aa)) form the Rho-GAP domain.

Found in a complex with XPO7, EIF4A1, ARHGAP1, VPS26A, VPS29, VPS35 and SFN. Interacts with BNIPL. In terms of tissue distribution, ubiquitous.

Its subcellular location is the cytoplasm. Its function is as follows. GTPase activator for the Rho, Rac and Cdc42 proteins, converting them to the putatively inactive GDP-bound state. Cdc42 seems to be the preferred substrate. This is Rho GTPase-activating protein 1 (ARHGAP1) from Homo sapiens (Human).